A 504-amino-acid chain; its full sequence is Arabinose import ATP-binding protein AraG (504 aa).

ABC transporter domains are found at residues 8-243 and 256-499; these read LSFR…MVGR and YGEE…MPKV. ATP is bound at residue 40–47; it reads GENGAGKS.

It belongs to the ABC transporter superfamily. Arabinose importer (TC 3.A.1.2.2) family. The complex is composed of two ATP-binding proteins (AraG), two transmembrane proteins (AraH) and a solute-binding protein (AraF).

The protein resides in the cell inner membrane. It carries out the reaction L-arabinose(out) + ATP + H2O = L-arabinose(in) + ADP + phosphate + H(+). Part of the ABC transporter complex AraFGH involved in arabinose import. Responsible for energy coupling to the transport system. This is Arabinose import ATP-binding protein AraG from Escherichia coli O157:H7.